A 164-amino-acid polypeptide reads, in one-letter code: tRNA (cytidine(34)-2'-O)-methyltransferase (164 aa).

Positions 80, 102, 124, and 132 each coordinate S-adenosyl-L-methionine.

The protein belongs to the class IV-like SAM-binding methyltransferase superfamily. RNA methyltransferase TrmH family. TrmL subfamily. As to quaternary structure, homodimer.

The protein resides in the cytoplasm. The enzyme catalyses cytidine(34) in tRNA + S-adenosyl-L-methionine = 2'-O-methylcytidine(34) in tRNA + S-adenosyl-L-homocysteine + H(+). It catalyses the reaction 5-carboxymethylaminomethyluridine(34) in tRNA(Leu) + S-adenosyl-L-methionine = 5-carboxymethylaminomethyl-2'-O-methyluridine(34) in tRNA(Leu) + S-adenosyl-L-homocysteine + H(+). Methylates the ribose at the nucleotide 34 wobble position in the two leucyl isoacceptors tRNA(Leu)(CmAA) and tRNA(Leu)(cmnm5UmAA). Catalyzes the methyl transfer from S-adenosyl-L-methionine to the 2'-OH of the wobble nucleotide. The polypeptide is tRNA (cytidine(34)-2'-O)-methyltransferase (Polaromonas sp. (strain JS666 / ATCC BAA-500)).